A 395-amino-acid polypeptide reads, in one-letter code: Succinyl-diaminopimelate desuccinylase (395 aa).

Residue His-74 participates in Zn(2+) binding. Asp-76 is an active-site residue. Residue Asp-107 participates in Zn(2+) binding. The active-site Proton acceptor is the Glu-141. 3 residues coordinate Zn(2+): Glu-142, Glu-170, and His-368.

The protein belongs to the peptidase M20A family. DapE subfamily. In terms of assembly, homodimer. Zn(2+) serves as cofactor. The cofactor is Co(2+).

The enzyme catalyses N-succinyl-(2S,6S)-2,6-diaminopimelate + H2O = (2S,6S)-2,6-diaminopimelate + succinate. It functions in the pathway amino-acid biosynthesis; L-lysine biosynthesis via DAP pathway; LL-2,6-diaminopimelate from (S)-tetrahydrodipicolinate (succinylase route): step 3/3. Its function is as follows. Catalyzes the hydrolysis of N-succinyl-L,L-diaminopimelic acid (SDAP), forming succinate and LL-2,6-diaminopimelate (DAP), an intermediate involved in the bacterial biosynthesis of lysine and meso-diaminopimelic acid, an essential component of bacterial cell walls. This Brucella canis (strain ATCC 23365 / NCTC 10854 / RM-666) protein is Succinyl-diaminopimelate desuccinylase.